The sequence spans 553 residues: MVSHKVLEFGDDGYKLPAQARAPRSLRKKRIYEKKIPGDDKMCAIDLLATVAGSLLLESKSPVNACLVVQNTVKNEYPADENPVKAVPYSESPSLFDNGKCGFSSVITNPNHLLVGDKVGKEVEGFSSLGVSGDVKPDVVASIGSNSSTEVGACGNGSPNESRDDVNLFSRNDDDENFSGYIRTRMTRPVPRIGDRRIRKILASRHWKGGSKNNTDAKPWYCSKRSYYLHHHQRSYPIKKRKYFDSVYDSNSDDYRLQGKTHKGSRTISSMKSRNASFVSRDHHVKLRIKSFRVPELFVEIPETATVGSLKRMVMEAVTTILGDGLRVGLMVQGKKVRDDGKTLLQTGISEENNHLDSLGFSLEPSLETTPQPLLSSYLSDHACDDVTLCHDNALDSSHEPEPSPADSFGKLGTSDHSRALIPVASAAMLAPRPPNRKFKRTEQQLAAQRRIRRPFSVTEVEALVQAVEKLGTGRWRDVKVRAFEDADHRTYVDLKDKWKTLVHTARISPQQRRGEPVPQELLDRVLKAHAYWSQHLMHQLQTEPPSTQVEAL.

The disordered stretch occupies residues 147 to 170 (SSTEVGACGNGSPNESRDDVNLFS). The Ubiquitin-like domain maps to 285–364 (VKLRIKSFRV…HLDSLGFSLE (80 aa)). A disordered region spans residues 394–413 (ALDSSHEPEPSPADSFGKLG). Positions 448–507 (AQRRIRRPFSVTEVEALVQAVEKLGTGRWRDVKVRAFEDADHRTYVDLKDKWKTLVHTAR) constitute an HTH myb-type domain. The segment at residues 476 to 503 (WRDVKVRAFEDADHRTYVDLKDKWKTLV) is a DNA-binding region (H-T-H motif).

In terms of assembly, homodimer and heterodimer with TRP1. Interacts with SNL1. As to expression, expressed ubiquitously. Highest expression in flowers and leaves.

Its subcellular location is the nucleus. Its function is as follows. Binds specifically to the plant telomeric double-stranded DNA sequences. At least 2 repeats of telomeric sequences are required for binding. Induces DNA bending. This is Telomere repeat-binding protein 2 (TRP2) from Arabidopsis thaliana (Mouse-ear cress).